The following is a 599-amino-acid chain: Putative sensor histidine kinase NtrY-like (599 aa).

Helical transmembrane passes span 17–37 (ILIL…FYVI), 44–64 (FSTI…LGIL), 85–105 (IVIA…VFSV), and 285–305 (IMFI…GVLF). The HAMP domain occupies 307 to 361 (AKIVKPIKKLVTATDKVKDGDLTVQVPENEVDKDEIGTLYAAFNRMIKQLSRQQR). A Histidine kinase domain is found at 378–589 (KVAHEIKNPL…IIDIKFDLKE (212 aa)). His381 carries the phosphohistidine; by autocatalysis modification.

The protein resides in the cell membrane. The enzyme catalyses ATP + protein L-histidine = ADP + protein N-phospho-L-histidine.. Functionally, member of the two-component regulatory system RP614/RP562. The chain is Putative sensor histidine kinase NtrY-like from Rickettsia prowazekii (strain Madrid E).